The chain runs to 143 residues: Host transcription reprogramming factor 8 (143 aa).

The N-terminal stretch at 1-19 is a signal peptide; that stretch reads MHTYKFIQIALLFASVALA. Over residues 24 to 34 the composition is skewed to pro residues; the sequence is PSPPNPPPVPQ. The interval 24–43 is disordered; sequence PSPPNPPPVPQLPNSETKSN. Residues 48-71 form a C2H2-type 1 zinc finger; it reads HSCEFCGVVKPSGPAYLEHYHQNH. A disordered region spans residues 77-99; it reads GKLATPSPPNPPPVPTQKVETHA. The span at 82–91 shows a compositional bias: pro residues; sequence PSPPNPPPVP. The segment at 103–126 adopts a C2H2-type 2 zinc-finger fold; that stretch reads HGCEWCNKVEPSGPAYIKHYKENH.

The protein resides in the secreted. It localises to the host nucleus. In terms of biological role, probable secreted effector that translocates into the nuclei of host cells to reprogram the expression of targeted genes by binding on effector binding elements in rice. This Pyricularia oryzae (strain 70-15 / ATCC MYA-4617 / FGSC 8958) (Rice blast fungus) protein is Host transcription reprogramming factor 8.